Here is a 70-residue protein sequence, read N- to C-terminus: UPF0352 protein Sden_2336 (70 aa).

Belongs to the UPF0352 family.

The polypeptide is UPF0352 protein Sden_2336 (Shewanella denitrificans (strain OS217 / ATCC BAA-1090 / DSM 15013)).